The primary structure comprises 166 residues: MREFSRTDRVAQQIQKEIAVILQREIKDPRLGMVTVSAVEVSRDLSYAKIFITVFNTQDDNAAKQSANVLNEATGYIRSLLGKRIRARIMPELKFLVDNSLMEGMRISNLVDSIIREDNAKHVADETDVEDSTDHEDDVTNSEDETKHVDIDTDSEEGTNTDGKAQ.

The tract at residues 122-166 (HVADETDVEDSTDHEDDVTNSEDETKHVDIDTDSEEGTNTDGKAQ) is disordered. Residues 126-143 (ETDVEDSTDHEDDVTNSE) are compositionally biased toward acidic residues.

Belongs to the RbfA family. In terms of assembly, monomer. Binds 30S ribosomal subunits, but not 50S ribosomal subunits or 70S ribosomes.

It is found in the cytoplasm. In terms of biological role, one of several proteins that assist in the late maturation steps of the functional core of the 30S ribosomal subunit. Associates with free 30S ribosomal subunits (but not with 30S subunits that are part of 70S ribosomes or polysomes). Required for efficient processing of 16S rRNA. May interact with the 5'-terminal helix region of 16S rRNA. The sequence is that of Ribosome-binding factor A from Pseudoalteromonas translucida (strain TAC 125).